The sequence spans 949 residues: MSELDHIKNESVDLVRIPMEEVFEELKCTKQGLTANEASHRLDVFGPNKLEEKKESKLLKFLGFMWNPLSWVMEVAALMAIALANGGGRPPDWQDFVGIVCLLLINSTISFIEENNAGNAAAALMAGLAPKTKVLRDNQWSEQEASILVPGDVISIKLGDIIPADARLLDGDPLKIDQSSLTGESIPVTKNPSDEVFSGSICKQGEIEAIVIATGVHTFFGKAAHLVDNTNQIGHFQKVLTSIGNFCICSIALGIIVELLVMYPIQRRRYRDGIDNLLVLLIGGIPIAMPSVLSVTMATGSHRLFQQGAITKRMTAIEEMAGMDVLCCDKTGTLTLNKLTVDKNLVEVFAKGVGKEHVFLLAARASRIENQDAIDAAIVGMLADPKEARAGVREVHFFPFNPVDKRTALTYVDSDGNWHRASKGAPEQILNLCNCKEDVRRKVHGVIDKFAERGLRSLAVARQEVLEKKKDAPGGPWQLVGLLPLFDPPRHDSAETIRRALNLGVNVKMITGDQLAIGKETGRRLGMGTNMYPSSALLGQVKDSSLGALPVDELIEKADGFAGVFPEHKYEIVHRLQQRNHICGMTGDGVNDAPALKKADIGIAVVDATDAARGASDIVLTEPGLSVIISAVLTSRAIFQRMKNYTIYAVSITIRIVFGFMFIALIWQFDFSPFMVLIIAILNDGTIMTISKDRMKPSPQPDSWKLRDIFSTGVVLGGYQALMTVVFFWVMKDSDFFSNYFGVRPLSQRPEQMMAALYLQVSIISQALIFVTRSRSWSYAECPGLLLLGAFVIAQLVATFIAVYANWSFARIEGAGWGWAGVIWLYSFLTYIPLDLLKFGIRYVLSGKAWLNLLENKTAFTTKKDYGKEEREAQWAAAQRTLHGLQPAEKNNIFNEKNSYSELSQIAEQAKRRAEVVRLREINTLKGHVESVVKLKGLDIDTIQQHYTV.

Serine 2 carries the N-acetylserine modification. The Cytoplasmic segment spans residues 2–61 (SELDHIKNESVDLVRIPMEEVFEELKCTKQGLTANEASHRLDVFGPNKLEEKKESKLLKF). A helical transmembrane segment spans residues 62 to 81 (LGFMWNPLSWVMEVAALMAI). Topologically, residues 82 to 93 (ALANGGGRPPDW) are extracellular. The helical transmembrane segment at 94–114 (QDFVGIVCLLLINSTISFIEE) threads the bilayer. Residues 115-243 (NNAGNAAAAL…GHFQKVLTSI (129 aa)) are Cytoplasmic-facing. The helical transmembrane segment at 244–264 (GNFCICSIALGIIVELLVMYP) threads the bilayer. At 265 to 273 (IQRRRYRDG) the chain is on the extracellular side. Residues 274 to 291 (IDNLLVLLIGGIPIAMPS) traverse the membrane as a helical segment. Over 292 to 643 (VLSVTMATGS…TSRAIFQRMK (352 aa)) the chain is Cytoplasmic. Aspartate 329 functions as the 4-aspartylphosphate intermediate in the catalytic mechanism. Positions 588 and 592 each coordinate Mg(2+). A helical transmembrane segment spans residues 644–665 (NYTIYAVSITIRIVFGFMFIAL). The Extracellular segment spans residues 666–670 (IWQFD). The helical transmembrane segment at 671–693 (FSPFMVLIIAILNDGTIMTISKD) threads the bilayer. Topologically, residues 694–709 (RMKPSPQPDSWKLRDI) are cytoplasmic. A helical transmembrane segment spans residues 710 to 730 (FSTGVVLGGYQALMTVVFFWV). The Extracellular segment spans residues 731–751 (MKDSDFFSNYFGVRPLSQRPE). Residues 752-772 (QMMAALYLQVSIISQALIFVT) traverse the membrane as a helical segment. Residues 773–784 (RSRSWSYAECPG) lie on the Cytoplasmic side of the membrane. A helical transmembrane segment spans residues 785–805 (LLLLGAFVIAQLVATFIAVYA). Residues 806–813 (NWSFARIE) are Extracellular-facing. The chain crosses the membrane as a helical span at residues 814–834 (GAGWGWAGVIWLYSFLTYIPL). Topologically, residues 835-949 (DLLKFGIRYV…IDTIQQHYTV (115 aa)) are cytoplasmic. At threonine 881 the chain carries Phosphothreonine. Phosphoserine is present on residues serine 899 and serine 931. An interaction with 14-3-3 proteins region spans residues 947 to 949 (YTV). Threonine 948 is modified (phosphothreonine).

The protein belongs to the cation transport ATPase (P-type) (TC 3.A.3) family. Type IIIA subfamily. As to quaternary structure, binds to 14-3-3 proteins. The binding is induced by phosphorylation of Thr-948. Binding to 14-3-3 proteins activates the H(+)-ATPase. In terms of tissue distribution, expressed in guard cells and leaves.

It localises to the membrane. It catalyses the reaction ATP + H2O + H(+)(in) = ADP + phosphate + 2 H(+)(out). Functionally, the plasma membrane H(+) ATPase of plants and fungi generates a proton gradient that drives the active transport of nutrients by H(+)-symport. The resulting external acidification and/or internal alkinization may mediate growth responses. The protein is ATPase 5, plasma membrane-type (AHA5) of Arabidopsis thaliana (Mouse-ear cress).